Consider the following 584-residue polypeptide: 2-succinyl-5-enolpyruvyl-6-hydroxy-3-cyclohexene-1-carboxylate synthase (584 aa).

It belongs to the TPP enzyme family. MenD subfamily. In terms of assembly, homodimer. Requires Mg(2+) as cofactor. It depends on Mn(2+) as a cofactor. Thiamine diphosphate serves as cofactor.

It carries out the reaction isochorismate + 2-oxoglutarate + H(+) = 5-enolpyruvoyl-6-hydroxy-2-succinyl-cyclohex-3-ene-1-carboxylate + CO2. Its pathway is quinol/quinone metabolism; 1,4-dihydroxy-2-naphthoate biosynthesis; 1,4-dihydroxy-2-naphthoate from chorismate: step 2/7. The protein operates within quinol/quinone metabolism; menaquinone biosynthesis. Its function is as follows. Catalyzes the thiamine diphosphate-dependent decarboxylation of 2-oxoglutarate and the subsequent addition of the resulting succinic semialdehyde-thiamine pyrophosphate anion to isochorismate to yield 2-succinyl-5-enolpyruvyl-6-hydroxy-3-cyclohexene-1-carboxylate (SEPHCHC). The protein is 2-succinyl-5-enolpyruvyl-6-hydroxy-3-cyclohexene-1-carboxylate synthase of Bacillus cereus (strain ATCC 10987 / NRS 248).